The chain runs to 83 residues: Apolipoprotein C-I, basic form (83 aa).

An N-terminal signal peptide occupies residues 1 to 26 (MRLFLSLPVLVVVLSMVLEGPAPVQG).

Belongs to the apolipoprotein C1 family.

It is found in the secreted. Functionally, inhibitor of lipoprotein binding to the low density lipoprotein (LDL) receptor, LDL receptor-related protein, and very low density lipoprotein (VLDL) receptor. Associates with high density lipoproteins (HDL) and the triacylglycerol-rich lipoproteins in the plasma and makes up about 10% of the protein of the VLDL and 2% of that of HDL. Appears to interfere directly with fatty acid uptake and is also the major plasma inhibitor of cholesteryl ester transfer protein (CETP). Binds free fatty acids and reduces their intracellular esterification. Modulates the interaction of APOE with beta-migrating VLDL and inhibits binding of beta-VLDL to the LDL receptor-related protein. This Papio anubis (Olive baboon) protein is Apolipoprotein C-I, basic form (APOC1).